The chain runs to 202 residues: Prostamide/prostaglandin F synthase (202 aa).

A Phosphotyrosine modification is found at Tyr-108.

Belongs to the peroxiredoxin-like PRXL2 family. Prostamide/prostaglandin F synthase subfamily.

It localises to the cytoplasm. It is found in the cytosol. It catalyses the reaction prostaglandin H2 + [thioredoxin]-dithiol = prostaglandin F2alpha + [thioredoxin]-disulfide. The catalysed reaction is prostamide F2alpha + [thioredoxin]-disulfide = prostamide H2 + [thioredoxin]-dithiol. In terms of biological role, catalyzes the reduction of prostaglandin-ethanolamide H(2) (prostamide H(2)) to prostamide F(2alpha) with NADPH as proton donor. Also able to reduce prostaglandin H(2) to prostaglandin F(2alpha). The chain is Prostamide/prostaglandin F synthase (PRXL2B) from Sus scrofa (Pig).